Reading from the N-terminus, the 85-residue chain is Cysteine-rich venom protein 1 (85 aa).

The N-terminal stretch at M1–A21 is a signal peptide. Intrachain disulfides connect C29/C63, C38/C59, C42/C53, C46/C84, and C65/C78. The TIL domain occupies C29 to C84.

It belongs to the serine protease inhibitor-like (TIL domain-containing) family. In terms of tissue distribution, expressed by the venom gland.

It localises to the secreted. Its function is as follows. May be a phenoloxidase inhibitor that stabilizes or inhibits venom phenoloxidase while it is stored in the venom sac. The polypeptide is Cysteine-rich venom protein 1 (Pimpla hypochondriaca (Parasitoid wasp)).